The sequence spans 103 residues: Large ribosomal subunit protein bL21 (103 aa).

It belongs to the bacterial ribosomal protein bL21 family. In terms of assembly, part of the 50S ribosomal subunit. Contacts protein L20.

Functionally, this protein binds to 23S rRNA in the presence of protein L20. This chain is Large ribosomal subunit protein bL21, found in Acidovorax sp. (strain JS42).